A 221-amino-acid chain; its full sequence is Large ribosomal subunit protein bL25 (221 aa).

The tract at residues 174-221 (SVVTVVPPTDEPTEEEVEAMEGEAATEEPEVVGEEKEEDSEEENKDEE) is disordered. Positions 184 to 221 (EPTEEEVEAMEGEAATEEPEVVGEEKEEDSEEENKDEE) are enriched in acidic residues.

The protein belongs to the bacterial ribosomal protein bL25 family. CTC subfamily. As to quaternary structure, part of the 50S ribosomal subunit; part of the 5S rRNA/L5/L18/L25 subcomplex. Contacts the 5S rRNA. Binds to the 5S rRNA independently of L5 and L18.

In terms of biological role, this is one of the proteins that binds to the 5S RNA in the ribosome where it forms part of the central protuberance. The protein is Large ribosomal subunit protein bL25 of Staphylococcus haemolyticus (strain JCSC1435).